We begin with the raw amino-acid sequence, 232 residues long: Clarin-1 (232 aa).

Residues 8 to 28 (IIFCMAGVLSFLCALGVVTAV) traverse the membrane as a helical segment. Asn-48 carries an N-linked (GlcNAc...) asparagine glycan. Transmembrane regions (helical) follow at residues 101-121 (IILF…FFMY) and 135-155 (LGLY…MILF). Residue Asn-184 is glycosylated (N-linked (GlcNAc...) asparagine). The chain crosses the membrane as a helical span at residues 186 to 206 (TTSFWVVFICFFVHFLNGLLI).

It belongs to the clarin family.

The protein resides in the cell membrane. In terms of biological role, may have a role in the excitatory ribbon synapse junctions between hair cells and cochlear ganglion cells and presumably also in analogous synapses within the retina. The chain is Clarin-1 (Clrn1) from Mus musculus (Mouse).